The primary structure comprises 154 residues: MPKGEGNVVAQNKKARHDYSIVDTIEAGIVLTGTEIKSVRAARIQLKDGYAQIKNGEAWLINVHIAPFEQGNIWNQDPERTRKLLLKKKQITKLQNDLKGTGMTLVPLKVYLKNGFAKVLLGIAKGKHDYDKRESIKRREQERDIKRIIKSVNR.

It belongs to the SmpB family.

It is found in the cytoplasm. Its function is as follows. Required for rescue of stalled ribosomes mediated by trans-translation. Binds to transfer-messenger RNA (tmRNA), required for stable association of tmRNA with ribosomes. tmRNA and SmpB together mimic tRNA shape, replacing the anticodon stem-loop with SmpB. tmRNA is encoded by the ssrA gene; the 2 termini fold to resemble tRNA(Ala) and it encodes a 'tag peptide', a short internal open reading frame. During trans-translation Ala-aminoacylated tmRNA acts like a tRNA, entering the A-site of stalled ribosomes, displacing the stalled mRNA. The ribosome then switches to translate the ORF on the tmRNA; the nascent peptide is terminated with the 'tag peptide' encoded by the tmRNA and targeted for degradation. The ribosome is freed to recommence translation, which seems to be the essential function of trans-translation. This Streptococcus thermophilus (strain CNRZ 1066) protein is SsrA-binding protein.